The sequence spans 453 residues: Na(+)/H(+) antiporter NhaA (453 aa).

11 helical membrane passes run 28 to 48 (FLHIEAFSGVVLLLAAAAALI), 79 to 99 (LHFLINDGLMTIFFLVVGMEI), 115 to 135 (ALPLAAALGGVVVPALIYFIL), 144 to 164 (GWAVPTATDIAFAVGVLALLG), 173 to 193 (VFLLALAIIDDIVAVLIIAVF), 196 to 216 (GGMDYSGFIIAAVGILMVLGM), 241 to 261 (TGAHPTLAGVVLGLMTPVFAP), 321 to 341 (VAFGIMPLFALANAGVSLDGI), 355 to 375 (VLIALVAGKPLGIIGASFLMV), 393 to 413 (LVGLLAGIGFTMSIFIATLAF), and 424 to 444 (LGILLASLSAAVLGLAWGFFQ).

Belongs to the NhaA Na(+)/H(+) (TC 2.A.33) antiporter family.

It is found in the cell inner membrane. The catalysed reaction is Na(+)(in) + 2 H(+)(out) = Na(+)(out) + 2 H(+)(in). In terms of biological role, na(+)/H(+) antiporter that extrudes sodium in exchange for external protons. This is Na(+)/H(+) antiporter NhaA from Janthinobacterium sp. (strain Marseille) (Minibacterium massiliensis).